The primary structure comprises 355 residues: tRNA uridine(34) hydroxylase (355 aa).

Residues D146 to L240 form the Rhodanese domain. C200 (cysteine persulfide intermediate) is an active-site residue.

This sequence belongs to the TrhO family.

The enzyme catalyses uridine(34) in tRNA + AH2 + O2 = 5-hydroxyuridine(34) in tRNA + A + H2O. Catalyzes oxygen-dependent 5-hydroxyuridine (ho5U) modification at position 34 in tRNAs. This is tRNA uridine(34) hydroxylase from Pectobacterium carotovorum subsp. carotovorum (strain PC1).